A 611-amino-acid chain; its full sequence is Serine protease FAM111A (611 aa).

The PIP-box signature appears at 16–28; the sequence is KCNMKIEHYFSPV. Lys20 is covalently cross-linked (Glycyl lysine isopeptide (Lys-Gly) (interchain with G-Cter in SUMO2)). The residue at position 26 (Ser26) is a Phosphoserine. Glycyl lysine isopeptide (Lys-Gly) (interchain with G-Cter in SUMO2) cross-links involve residues Lys30 and Lys65. Residues 44–73 form a disordered region; the sequence is ESRGDPRATTNTQAQRFHSPKKNPEDQTMP. The tract at residues 336 to 611 is interaction with SV40 large T antigen; it reads KVTKNSSSIK…DVEMMSDEDL (276 aa). Catalysis depends on charge relay system residues His385, Asp439, and Ser541.

Belongs to the FAM111 family. In terms of assembly, interacts (via PIP-box) with PCNA; then interaction is direct. (Microbial infection) Interacts with SV40 virus large T antigen and this interaction is required for efficient viral replication and sustained viral gene expression in restrictive cell types. As to quaternary structure, (Microbial infection) Interacts with vaccinia virus protein OPG079; this interaction promotes the degradation of OPG079. Post-translationally, autocatalytically cleaved; activating the protein. Autocatalytic cleavage takes place in trans.

The protein localises to the nucleus. It localises to the chromosome. The protein resides in the cytoplasm. Single-stranded DNA-binding serine protease that mediates the proteolytic cleavage of covalent DNA-protein cross-links (DPCs) during DNA synthesis, thereby playing a key role in maintaining genomic integrity. DPCs are highly toxic DNA lesions that interfere with essential chromatin transactions, such as replication and transcription, and which are induced by reactive agents, such as UV light or formaldehyde. Protects replication fork from stalling by removing DPCs, such as covalently trapped topoisomerase 1 (TOP1) adducts on DNA lesion, or poly(ADP-ribose) polymerase 1 (PARP1)-DNA complexes trapped by PARP inhibitors. Required for PCNA loading on replication sites. Promotes S-phase entry and DNA synthesis. Also acts as a restriction factor for some viruses including SV40 polyomavirus and vaccinia virus. Mechanistically, affects nuclear barrier function during viral replication by mediating the disruption of the nuclear pore complex (NPC) via its protease activity. In turn, interacts with vaccinia virus DNA-binding protein OPG079 in the cytoplasm and promotes its degradation without the need of its protease activity but through autophagy. The sequence is that of Serine protease FAM111A from Homo sapiens (Human).